The following is a 180-amino-acid chain: Putative pre-16S rRNA nuclease (180 aa).

Residues 1–12 are compositionally biased toward basic and acidic residues; it reads MDAQERSERPDP. Positions 1–23 are disordered; the sequence is MDAQERSERPDPATDPGRGRRLG.

Belongs to the YqgF nuclease family.

It localises to the cytoplasm. Its function is as follows. Could be a nuclease involved in processing of the 5'-end of pre-16S rRNA. The protein is Putative pre-16S rRNA nuclease of Nocardia farcinica (strain IFM 10152).